A 693-amino-acid polypeptide reads, in one-letter code: Elongation factor G (693 aa).

The tr-type G domain occupies 8–282 (EKFRNFGIMA…AVVDYLPSPI (275 aa)). GTP-binding positions include 17-24 (AHIDAGKT), 81-85 (DTPGH), and 135-138 (NKMD).

The protein belongs to the TRAFAC class translation factor GTPase superfamily. Classic translation factor GTPase family. EF-G/EF-2 subfamily.

Its subcellular location is the cytoplasm. Functionally, catalyzes the GTP-dependent ribosomal translocation step during translation elongation. During this step, the ribosome changes from the pre-translocational (PRE) to the post-translocational (POST) state as the newly formed A-site-bound peptidyl-tRNA and P-site-bound deacylated tRNA move to the P and E sites, respectively. Catalyzes the coordinated movement of the two tRNA molecules, the mRNA and conformational changes in the ribosome. The chain is Elongation factor G from Mycoplasmoides gallisepticum (strain R(low / passage 15 / clone 2)) (Mycoplasma gallisepticum).